The chain runs to 236 residues: 7-cyano-7-deazaguanine synthase 2 (236 aa).

An ATP-binding site is contributed by 11-21; that stretch reads FSGGQDSATCL. Zn(2+) contacts are provided by cysteine 199, cysteine 214, cysteine 217, and cysteine 220.

The protein belongs to the QueC family. The cofactor is Zn(2+).

The enzyme catalyses 7-carboxy-7-deazaguanine + NH4(+) + ATP = 7-cyano-7-deazaguanine + ADP + phosphate + H2O + H(+). It participates in purine metabolism; 7-cyano-7-deazaguanine biosynthesis. In terms of biological role, catalyzes the ATP-dependent conversion of 7-carboxy-7-deazaguanine (CDG) to 7-cyano-7-deazaguanine (preQ(0)). The polypeptide is 7-cyano-7-deazaguanine synthase 2 (Sphingopyxis alaskensis (strain DSM 13593 / LMG 18877 / RB2256) (Sphingomonas alaskensis)).